Reading from the N-terminus, the 202-residue chain is Complement component C8 gamma chain (202 aa).

Residues 1–20 (MLPPGTATLLTLLLAAGSLG) form the signal peptide. The residue at position 21 (glutamine 21) is a Pyrrolidone carboxylic acid. An intrachain disulfide couples cysteine 96 to cysteine 188.

It belongs to the calycin superfamily. Lipocalin family. In terms of assembly, heterotrimer of 3 chains: alpha (C8A), beta (C8B) and gamma (C8G); the alpha and gamma chains are disulfide bonded. Component of the membrane attack complex (MAC), composed of complement C5b, C6, C7, C8A, C8B, C8G and multiple copies of the pore-forming subunit C9.

The protein localises to the secreted. It localises to the target cell membrane. Membrane attack complex (MAC) assembly is inhibited by CD59, thereby protecting self-cells from damage during complement activation. MAC assembly is also inhibited by clusterin (CLU) chaperones that inhibit polymerization of C9. Its function is as follows. Component of the membrane attack complex (MAC), a multiprotein complex activated by the complement cascade, which inserts into a target cell membrane and forms a pore, leading to target cell membrane rupture and cell lysis. The MAC is initiated by proteolytic cleavage of C5 into complement C5b in response to the classical, alternative, lectin and GZMK complement pathways. The complement pathways consist in a cascade of proteins that leads to phagocytosis and breakdown of pathogens and signaling that strengthens the adaptive immune system. C8G, together with C8A and C8B, inserts into the target membrane, but does not form pores by itself. During MAC assembly, associates with C5b, C6 and C7 to form the C5b8 intermediate complex that inserts into the target membrane and traverses the bilayer increasing membrane rigidity. The protein is Complement component C8 gamma chain of Homo sapiens (Human).